A 127-amino-acid chain; its full sequence is MAQSVPPGDINTQPGSKIVFNAPYDDKHTYHIKITNAGGRRIGWAIKTTNMRRLGVDPPCGVLDPKESVLMAVSCDTFNAATEDLNNDRITIEWTNTPDGAAKQFRREWFQGDGMVRRKNLPIEYNL.

Alanine 2 carries the N-acetylalanine modification. Residues 9–126 (DINTQPGSKI…RRKNLPIEYN (118 aa)) enclose the MSP domain.

In terms of assembly, forms filaments 10 nm wide, with a characteristic substructure repeating axially at 9 nm. In terms of tissue distribution, sperm.

It localises to the cell projection. The protein localises to the pseudopodium. The protein resides in the cytoplasm. It is found in the cytoskeleton. In terms of biological role, central component in molecular interactions underlying sperm crawling. Forms an extensive filament system that extends from sperm villipoda, along the leading edge of the pseudopod. The chain is Major sperm protein isoform beta from Ascaris suum (Pig roundworm).